The following is a 312-amino-acid chain: Olfactory receptor 51A7 (312 aa).

Residues 1-25 lie on the Extracellular side of the membrane; that stretch reads MSVLNNSEVKLFLLIGIPGLEHAHI. N5 carries N-linked (GlcNAc...) asparagine glycosylation. A helical membrane pass occupies residues 26–46; it reads WFSIPICLMYLLAIMGNCTIL. Topologically, residues 47–54 are cytoplasmic; that stretch reads FIIKTEPS. Residues 55-75 traverse the membrane as a helical segment; the sequence is LHEPMYYFLAMLAVSDMGLSL. Residues 76-99 are Extracellular-facing; the sequence is SSLPTMLRVFLFNAMGISPNACFA. Cysteines 97 and 189 form a disulfide. The helical transmembrane segment at 100 to 120 threads the bilayer; it reads QEFFIHGFTVMESSVLLIMSL. Topologically, residues 121–139 are cytoplasmic; the sequence is DRFLAIHNPLRYSSILTSN. Residues 140–160 traverse the membrane as a helical segment; that stretch reads RVAKMGLILAIRSILLVIPFP. Topologically, residues 161–196 are extracellular; that stretch reads FTLRRLKYCQKNLLSHSYCLHQDTMKLACSDNKTNV. The N-linked (GlcNAc...) asparagine glycan is linked to N192. Residues 197–216 traverse the membrane as a helical segment; the sequence is IYGFFIALCTMLDLALIVLS. At 217-236 the chain is on the cytoplasmic side; that stretch reads YVLILKTILSIASLAERLKA. Residues 237-257 traverse the membrane as a helical segment; that stretch reads LNTCVSHICAVLTFYVPIITL. The Extracellular portion of the chain corresponds to 258-272; it reads AAMHHFAKHKSPLVV. The chain crosses the membrane as a helical span at residues 273-293; that stretch reads ILIADMFLLVPPLMNPIVYCV. Residues 294–312 are Cytoplasmic-facing; sequence KTRQIWEKILGKLLNVCGR.

The protein belongs to the G-protein coupled receptor 1 family.

The protein localises to the cell membrane. Its function is as follows. Odorant receptor. The chain is Olfactory receptor 51A7 (OR51A7) from Homo sapiens (Human).